The following is a 223-amino-acid chain: Proteasome subunit beta type-1 (223 aa).

It belongs to the peptidase T1B family. Component of the 20S core complex of the 26S proteasome. The 26S proteasome is composed of a core protease (CP), known as the 20S proteasome, capped at one or both ends by the 19S regulatory particle (RP/PA700). The 20S proteasome core is composed of 28 subunits that are arranged in four stacked rings, resulting in a barrel-shaped structure. The two end rings are each formed by seven alpha subunits, and the two central rings are each formed by seven beta subunits. The catalytic chamber with the active sites is on the inside of the barrel. In terms of tissue distribution, present in all tissues examined. Slightly lower levels in roots.

The protein localises to the cytoplasm. It is found in the nucleus. Functionally, non-catalytic component of the proteasome, a multicatalytic proteinase complex which is characterized by its ability to cleave peptides with Arg, Phe, Tyr, Leu, and Glu adjacent to the leaving group at neutral or slightly basic pH. The proteasome has an ATP-dependent proteolytic activity. In Arabidopsis thaliana (Mouse-ear cress), this protein is Proteasome subunit beta type-1 (PBF1).